The chain runs to 382 residues: tRNA (guanine-N(7)-)-methyltransferase non-catalytic subunit wuho (382 aa).

Residues 40–59 (VKDTDAGNEPNGNQTQPTPA) form a disordered region. Positions 49-59 (PNGNQTQPTPA) are enriched in polar residues. WD repeat units follow at residues 149–190 (GHMS…ECFC) and 192–230 (GHTE…ELSK).

The protein belongs to the WD repeat TRM82 family. Forms a heterodimer with the catalytic subunit.

The protein resides in the nucleus. Its pathway is tRNA modification; N(7)-methylguanine-tRNA biosynthesis. Its function is as follows. Required for the formation of N(7)-methylguanine at position 46 (m7G46) in tRNA. In the complex, it is required to stabilize and induce conformational changes of the catalytic subunit. This Anopheles gambiae (African malaria mosquito) protein is tRNA (guanine-N(7)-)-methyltransferase non-catalytic subunit wuho.